Here is a 535-residue protein sequence, read N- to C-terminus: Dynein axonemal assembly factor 8 (535 aa).

Disordered regions lie at residues 112 to 215 (AELA…QERR), 228 to 267 (RDACGPASSDQGGVKEAPCHAVESAARSKMPLAEPPEGPP), 344 to 380 (PADTPQDTEEAGAGSRCSSRKPGSEAGPGPQLAQGMR), 395 to 444 (TVPP…LRSC), and 461 to 535 (IAQP…LDQL). The span at 125-139 (RTKDASSQEGRDPGR) shows a compositional bias: basic and acidic residues. The segment covering 166 to 175 (GSLSFNTKGS) has biased composition (polar residues). S175 carries the phosphoserine modification. S362 bears the Phosphoserine mark. Residues 415-424 (DSEEEEEEVE) show a composition bias toward acidic residues. The span at 435 to 444 (SPSSLGLRSC) shows a compositional bias: polar residues.

It localises to the dynein axonemal particle. The protein resides in the cytoplasm. In terms of biological role, in cyliated cells, dynein axonemal particle-specific protein required for deployment of ODA to the axoneme. Interacts with outer dynein arm (ODA) subunits. This chain is Dynein axonemal assembly factor 8 (DNAAF8), found in Macaca fascicularis (Crab-eating macaque).